The following is a 633-amino-acid chain: UvrABC system protein C (633 aa).

Residues Pro-37–Ile-115 enclose the GIY-YIG domain. The UVR domain occupies Asn-225–Val-260.

The protein belongs to the UvrC family. As to quaternary structure, interacts with UvrB in an incision complex.

The protein localises to the cytoplasm. The UvrABC repair system catalyzes the recognition and processing of DNA lesions. UvrC both incises the 5' and 3' sides of the lesion. The N-terminal half is responsible for the 3' incision and the C-terminal half is responsible for the 5' incision. The sequence is that of UvrABC system protein C from Maricaulis maris (strain MCS10) (Caulobacter maris).